A 471-amino-acid polypeptide reads, in one-letter code: 5-hydroxytryptamine receptor 2B (471 aa).

Residues 1–26 lie on the Extracellular side of the membrane; it reads MFQAAVGPLQTNISLPEETPGLELNW. The N-linked (GlcNAc...) asparagine glycan is linked to Asn12. The helical transmembrane segment at 27 to 49 threads the bilayer; it reads AALLIVMVIIPTIGGNILVILAV. Topologically, residues 50–60 are cytoplasmic; sequence WLEKKLQNATN. A helical membrane pass occupies residues 61–83; sequence FFLMSLAVADLLVGLLVMPIALI. Residues 84 to 99 lie on the Extracellular side of the membrane; the sequence is TILYDSDWPLPEPLCP. Cys98 and Cys182 are disulfide-bonded. A helical membrane pass occupies residues 100–121; it reads IWLFLDVLFSTASIMHLCAISL. Ergotamine is bound by residues Asp105 and Thr110. The DRY motif; important for ligand-induced conformation changes motif lies at 122-124; it reads DRY. The Cytoplasmic segment spans residues 122–141; the sequence is DRYIAIKKPIQHSQYKSRAK. The chain crosses the membrane as a helical span at residues 142–162; that stretch reads VMLKIALVWLISICIAIPIPI. The Extracellular portion of the chain corresponds to 163–191; it reads KGLRNYPHPNNITFTSNHTCVLKTDTFQE. N-linked (GlcNAc...) asparagine glycosylation is found at Asn173 and Asn179. Ergotamine is bound at residue Leu184. Positions 187–190 match the [DE]RFG motif; may stabilize a conformation that preferentially activates signaling via beta-arrestin family members motif; it reads DTFQ. The chain crosses the membrane as a helical span at residues 192–214; sequence FIIFGSLVAFFIPLTIMMIIYFL. Residues 215-308 are Cytoplasmic-facing; sequence TVRVLRKKVY…TLTNEQRASK (94 aa). A helical transmembrane segment spans residues 309–329; the sequence is VLGIVFLLFVVMWCPFFITNI. Over 330 to 344 the chain is Extracellular; the sequence is TSALCGPCDANIIGR. The cysteines at positions 334 and 337 are disulfide-linked. Residues 345–366 traverse the membrane as a helical segment; it reads LMEIFSWVGYVSSGINPLVYTL. The short motif at 360–364 is the NPxxY motif; important for ligand-induced conformation changes and signaling element; the sequence is NPLVY. The Cytoplasmic segment spans residues 367 to 471; the sequence is FNKTFRQAFT…CKQEERVSCV (105 aa). Cys381 carries the S-palmitoyl cysteine lipid modification. The PDZ-binding motif lies at 469 to 471; sequence SCV.

The protein belongs to the G-protein coupled receptor 1 family. As to expression, detected in brain, heart and gut.

It is found in the cell membrane. It localises to the synapse. The protein localises to the synaptosome. Functionally, G-protein coupled receptor for 5-hydroxytryptamine (serotonin). Also functions as a receptor for various ergot alkaloid derivatives and psychoactive substances. Ligand binding causes a conformation change that triggers signaling via guanine nucleotide-binding proteins (G proteins) and modulates the activity of downstream effectors. HTR2B is coupled to G(q)/G(11) G alpha proteins and activates phospholipase C-beta, releasing diacylglycerol (DAG) and inositol 1,4,5-trisphosphate (IP3) second messengers that modulate the activity of phosphatidylinositol 3-kinase and promote the release of Ca(2+) ions from intracellular stores, respectively. Beta-arrestin family members inhibit signaling via G proteins and mediate activation of alternative signaling pathways. Plays a role in the regulation of dopamine and 5-hydroxytryptamine release, 5-hydroxytryptamine uptake and in the regulation of extracellular dopamine and 5-hydroxytryptamine levels, and thereby affects neural activity. This is 5-hydroxytryptamine receptor 2B (htr2b) from Dichotomyctere fluviatilis (Green pufferfish).